A 797-amino-acid polypeptide reads, in one-letter code: MAAAPVAAGSGAGRGRRSAATVAAWGGWGGRPRPGNILLQLRQGQLTGRGLVRAVQFTETFLTERDKQSKWSGIPQLLLKLHTTSHLHSDFVECQNILKEISPLLSMEAMAFVTEERKLTQETTYPNTYIFDLFGGVDLLVEILMRPTISIRGQKLKISDEMSKDCLSILYNTCVCTEGVTKRLAEKNDFVIFLFTLMTSKKTFLQTATLIEDILGVKKEMIRLDEVPNLSSLVSNFDQQQLANFCRILAVTISEMDTGNDDKHTLLAKNAQQKKSLSLGPSAAEINQAALLSIPGFVERLCKLATRKVSESTGTASFLQELEEWYTWLDNALVLDALMRVANEESEHNQASIVFPPPGASEENGLPHTSARTQLPQSMKIMHEIMYKLEVLYVLCVLLMGRQRNQVHRMIAEFKLIPGLNNLFDKLIWRKHSASALVLHGHNQNCDCSPDITLKIQFLRLLQSFSDHHENKYLLLNNQELNELSAISLKANIPEVEAVLNTDRSLVCDGKRGLLTRLLQVMKKEPAESSFRFWQARAVESFLRGTTSYADQMFLLKRGLLEHILYCIVDSECKSRDVLQSYFDLLGELMKFNVDAFKRFNKYINTDAKFQVFLKQINSSLVDSNMLVRCVTLSLDRFENQVDMKVAEVLSECRLLAYISQVPTQMSFLFRLINIIHVQTLTQENVSCLNTSLVILMLARRKERLPLYLRLLQRMEHSKKYPGFLLNNFHNLLRFWQQHYLHKDKDSTCLENSSCISFSYWKETVSILLNPDRQSPSALVSYIEEPYMDIDRDFTEE.

Ala2 bears the N-acetylalanine mark. The interaction with TNFRSF1A stretch occupies residues Ala2–Met400.

In terms of assembly, component of the DCX(TRPC4AP) E3 ubiquitin ligase complex, at least composed of CUL4A, DDB1, TRPC4AP/TRUSS and RBX1. Interacts with MYC. Constitutively associated with TNFRSF1A. Directly interacts with TRADD, TRAF2, CHUK, IKBKB and IKBKG. Interacts with TRPC1, TRPC4 and TRPC5. As to quaternary structure, (Microbial infection) Interacts with Hepatitis B virus (HBV) protein X; leading to prevent ubiquitination of TRPC4AP by SKP2. Post-translationally, phosphorylated by GSK3B; phosphorylation is required for ubiquitination. In terms of processing, ubiquitinated by a SCF (SKP1-CUL1-F-box protein) E3 ubiquitin-protein ligase containing SKP2, leading to its degradation. Phosphorylation by GSK3B is required for ubiquitination.

Its subcellular location is the cytoplasm. It is found in the perinuclear region. It participates in protein modification; protein ubiquitination. Substrate-recognition component of a DCX (DDB1-CUL4-X-box) E3 ubiquitin-protein ligase complex required for cell cycle control. The DCX(TRPC4AP) complex specifically mediates the polyubiquitination and subsequent degradation of MYC as part of the DesCEND (destruction via C-end degrons) pathway. The DesCEND (destruction via C-end degrons) pathway recognizes a C-degron located at the extreme C terminus of target proteins, leading to their ubiquitination and degradation. The DCX(TRPC4AP) complex specifically recognizes proteins with an arginine at the minus 3 position (R-3 motif) at the C-terminus, such as MYC, leading to their ubiquitination and degradation. Also participates in the activation of NFKB1 in response to ligation of TNFRSF1A, possibly by linking TNFRSF1A to the IKK signalosome. Involved in JNK activation via its interaction with TRAF2. Also involved in elevation of endoplasmic reticulum Ca(2+) storage reduction in response to CHRM1. In Homo sapiens (Human), this protein is Short transient receptor potential channel 4-associated protein.